The chain runs to 125 residues: Meiotically up-regulated gene 112 protein (125 aa).

It is found in the golgi apparatus. Its function is as follows. Has a role in meiosis. The chain is Meiotically up-regulated gene 112 protein (mug112) from Schizosaccharomyces pombe (strain 972 / ATCC 24843) (Fission yeast).